The following is an 89-amino-acid chain: Small ribosomal subunit protein uS15 (89 aa).

Basic and acidic residues predominate over residues 1–11; sequence MSITAERKAEV. Residues 1–24 form a disordered region; the sequence is MSITAERKAEVIKTSATKAGDTGS.

Belongs to the universal ribosomal protein uS15 family. In terms of assembly, part of the 30S ribosomal subunit. Forms a bridge to the 50S subunit in the 70S ribosome, contacting the 23S rRNA.

In terms of biological role, one of the primary rRNA binding proteins, it binds directly to 16S rRNA where it helps nucleate assembly of the platform of the 30S subunit by binding and bridging several RNA helices of the 16S rRNA. Its function is as follows. Forms an intersubunit bridge (bridge B4) with the 23S rRNA of the 50S subunit in the ribosome. This Rhodopseudomonas palustris (strain TIE-1) protein is Small ribosomal subunit protein uS15.